Reading from the N-terminus, the 509-residue chain is Src substrate cortactin (509 aa).

The segment at 1–28 (MWKASAGHAVSITQDDGGADDWETDPDF) is disordered. Residues 17–28 (GGADDWETDPDF) show a composition bias toward acidic residues. Cortactin repeat units follow at residues 80–116 (ASHGYGGKFGVEQDRMDKSAVGHEYQSKLSKHCSQVD), 117–153 (SVRGFGGKFGVQMDRVDQSAVGFEYQGKTEKHASQKD), 154–190 (YSSGFGGKYGVQADRVDKSAVGFDYQGKTEKHESQKD), 191–227 (YSKGFGGKYGIDKDKVDKSAVGFEYQGKTEKHESQKD), and 228–264 (YVKGFGGKFGVQTDRQDKCALGWDHQEKLQLHESQKD). An N6-acetyllysine mark is found at Lys-87 and Lys-107. At Ser-113 the chain carries Phosphoserine. Arg-119 is subject to Omega-N-methylarginine. Lys-124 carries the post-translational modification N6-acetyllysine. Lys-144 is modified (N6-acetyllysine; alternate). Lys-144 participates in a covalent cross-link: Glycyl lysine isopeptide (Lys-Gly) (interchain with G-Cter in SUMO1); alternate. A Glycyl lysine isopeptide (Lys-Gly) (interchain with G-Cter in SUMO2); alternate cross-link involves residue Lys-144. Ser-150 carries the phosphoserine modification. N6-acetyllysine is present on residues Lys-152, Lys-161, and Lys-171. Position 181 is an N6-acetyllysine; alternate (Lys-181). Lys-181 is covalently cross-linked (Glycyl lysine isopeptide (Lys-Gly) (interchain with G-Cter in SUMO1); alternate). Residue Lys-181 forms a Glycyl lysine isopeptide (Lys-Gly) (interchain with G-Cter in SUMO2); alternate linkage. N6-acetyllysine occurs at positions 193 and 198. A Glycyl lysine isopeptide (Lys-Gly) (interchain with G-Cter in SUMO1) cross-link involves residue Lys-218. The residue at position 235 (Lys-235) is an N6-acetyllysine. Ser-261 is modified (phosphoserine). A Cortactin 6; truncated repeat occupies 265–287 (YAKGFGGKYGVQKDRMDKNASTF). An N6-acetyllysine mark is found at Lys-267, Lys-272, Lys-277, and Lys-309. The stretch at 311–364 (SNIRANFENLAKEREQEDRRKAEAERAQRMAQERQEQEEARRKLEEQARAKKQT) forms a coiled coil. Residues 318 to 409 (ENLAKEREQE…EPEPEYSTEA (92 aa)) are disordered. The span at 320-359 (LAKEREQEDRRKAEAERAQRMAQERQEQEEARRKLEEQAR) shows a compositional bias: basic and acidic residues. A Phosphothreonine modification is found at Thr-364. 4 positions are modified to phosphoserine: Ser-368, Ser-370, Ser-380, and Ser-381. Residue Tyr-384 is modified to Phosphotyrosine; by FAK1. A compositionally biased stretch (low complexity) spans 393–406 (EPSYGSSEPEPEYS). Tyr-405 bears the Phosphotyrosine mark. Phosphoserine is present on Ser-406. Tyr-429 and Tyr-445 each carry phosphotyrosine; by FAK1. A phosphotyrosine; by SRC mark is found at Tyr-445 and Tyr-448. Residues 451-509 (DLGITAIALYDYQAAGDDEISFDPDDVITNIEMIDDGWWRGVCKGRYGLFPANYVELRQ) enclose the SH3 domain.

In terms of assembly, part of a complex composed of NEDD9, AURKA and CTTN; within the complex NEDD9 acts as a scaffold protein and is required for complex formation. Interacts (via N-terminus) with NEDD9. Identified in a complex containing FGFR4, NCAM1, CDH2, PLCG1, FRS2, SRC, SHC1, GAP43 and CTTN. Forms a complex with ABL1 and MYLK. Interacts with SHANK2 and SHANK3 (via its SH3 domain). Interacts with PLXDC2 and SRCIN1. Interacts with SAMSN1 (via SH3 domain). Interacts (via SH3 domain) with ASAP1 (via Pro-rich region). Interacts with FER. Interacts with FGD1. Interacts with ABL2. Interacts with CTTNBP2NL; this interaction may target CTTN to stress fibers. Interacts with CTTNBP2; this interaction may target CTTN at the cell cortex or dendritic spines. Interacts (via SH3 domain) with DNM2. Interacts with ACTN1. Interacts with KCNA2 (via non-phosphorylated C-terminus). Interacts with PTK2/FAK1. Interacts with KCNH1. Interacts (via SH3 domain) with DIP2A (via N-terminus); the interaction enhances CTTN acetylation and is required for proper synaptic transmission. Interacts with XIRP1 (via N-terminus); the interaction promotes CTTN localization to intercalated disks in cardiomyocytes. Acetylated. Post-translationally, phosphorylated by FER. Phosphorylated in response to FGR activation. Phosphorylation by SRC promotes MYLK binding. Tyrosine phosphorylation in transformed cells may contribute to cellular growth regulation and transformation. Phosphorylated by PKN2 at both serine and threonine residues in a GTP-bound Rac1-dependent manner in hyaluronan-induced astrocytes and hence down-regulated CTTN ability to associate with filamentous actin. Phosphorylated on tyrosine residues in response to CHRM1 activation. Phosphorylated by PTK2/FAK1 in response to cell adhesion. Detected in liver (at protein level).

Its subcellular location is the cytoplasm. It is found in the cytoskeleton. It localises to the cell projection. The protein resides in the lamellipodium. The protein localises to the ruffle. Its subcellular location is the dendrite. It is found in the cell membrane. It localises to the podosome. The protein resides in the cell junction. The protein localises to the focal adhesion. Its subcellular location is the membrane. It is found in the clathrin-coated pit. It localises to the dendritic spine. The protein resides in the cell cortex. The protein localises to the endoplasmic reticulum. Functionally, contributes to the organization of the actin cytoskeleton and cell shape. Plays a role in the formation of lamellipodia and in cell migration. Plays a role in the regulation of neuron morphology, axon growth and formation of neuronal growth cones. Through its interaction with CTTNBP2, involved in the regulation of neuronal spine density. Plays a role in focal adhesion assembly and turnover. In complex with ABL1 and MYLK regulates cortical actin-based cytoskeletal rearrangement critical to sphingosine 1-phosphate (S1P)-mediated endothelial cell (EC) barrier enhancement. Plays a role in intracellular protein transport and endocytosis, and in modulating the levels of potassium channels present at the cell membrane. Plays a role in receptor-mediated endocytosis via clathrin-coated pits. Required for stabilization of KCNH1 channels at the cell membrane. In Rattus norvegicus (Rat), this protein is Src substrate cortactin.